A 45-amino-acid chain; its full sequence is Lysis protein for colicin E1* (45 aa).

The signal sequence occupies residues 1–17 (MRKRFFVGIFAINLLVG). The N-palmitoyl cysteine moiety is linked to residue Cys18. The S-diacylglycerol cysteine moiety is linked to residue Cys18.

Its subcellular location is the cell outer membrane. Functionally, lysis proteins are required for both colicin release and partial cell lysis. This is Lysis protein for colicin E1* (kil) from Shigella sonnei.